We begin with the raw amino-acid sequence, 638 residues long: Zinc finger protein 143 (638 aa).

Residue methionine 1 is modified to N-acetylmethionine. Lysine 213 is covalently cross-linked (Glycyl lysine isopeptide (Lys-Gly) (interchain with G-Cter in SUMO2)). 4 consecutive C2H2-type zinc fingers follow at residues 237–261 (FRCEYDGCGKLYTTAHHLKVHERSH), 267–291 (YQCEHAGCGKAFATGYGLKSHVRTH), 297–321 (YRCSEDNCTKSFKTSGDLQKHIRTH), and 327–351 (FKCPFEGCGRSFTTSNIRKVHVRTH). Residue threonine 352 is modified to Phosphothreonine. 3 consecutive C2H2-type zinc fingers follow at residues 357-381 (YYCTEPGCGRAFASATNYKNHVRIH), 387-411 (YVCTVPGCDKRFTEYSSLYKHHVVH), and 417-440 (YNCNHCGKTYKQISTLAMHKRTAH). A Glycyl lysine isopeptide (Lys-Gly) (interchain with G-Cter in SUMO2) cross-link involves residue lysine 406.

Belongs to the GLI C2H2-type zinc-finger protein family. In terms of assembly, interacts with CHD8. Forms a complex with HCFC1 and ZNF143. In terms of tissue distribution, expressed in all tissues tested, with the strongest expression in ovary.

It localises to the nucleus. Transcriptional activator. Activates the gene for selenocysteine tRNA (tRNAsec). Binds to the SPH motif of small nuclear RNA (snRNA) gene promoters. Participates in efficient U6 RNA polymerase III transcription via its interaction with CHD8. In complex with HCFC1 and ZNF143, regulates the expression of several genes, including AP2S1, ESCO2, OPHN1, RBL1, UBXN8 and ZNF32. The polypeptide is Zinc finger protein 143 (ZNF143) (Homo sapiens (Human)).